Reading from the N-terminus, the 343-residue chain is ATP-dependent (S)-NAD(P)H-hydrate dehydratase (343 aa).

A mitochondrion-targeting transit peptide spans 1–42; that stretch reads MAVCPYGAAAVVMALLSAAIAFHCSPLLAVLQRALSLHTAHA. Residues 49–340 enclose the YjeF C-terminal domain; sequence LFQLVRNIVP…AEVGAAFSKL (292 aa). K63 is subject to N6-acetyllysine. Residue Y81 is modified to Phosphotyrosine. (6S)-NADPHX is bound by residues G149 and 202–208; that span reads NHVEFSR. ATP is bound by residues 242–246 and 261–270; these read KGEQD and GSSRRCGGQG. D271 contacts (6S)-NADPHX.

It belongs to the NnrD/CARKD family. The cofactor is Mg(2+).

The protein resides in the mitochondrion. The enzyme catalyses (6S)-NADHX + ATP = ADP + phosphate + NADH + H(+). It carries out the reaction (6S)-NADPHX + ATP = ADP + phosphate + NADPH + H(+). Catalyzes the dehydration of the S-form of NAD(P)HX at the expense of ATP, which is converted to ADP. Together with NAD(P)HX epimerase, which catalyzes the epimerization of the S- and R-forms, the enzyme allows the repair of both epimers of NAD(P)HX, a damaged form of NAD(P)H that is a result of enzymatic or heat-dependent hydration. This is ATP-dependent (S)-NAD(P)H-hydrate dehydratase from Rattus norvegicus (Rat).